A 612-amino-acid polypeptide reads, in one-letter code: Dihydroxy-acid dehydratase (612 aa).

D81 is a binding site for Mg(2+). Residue C122 coordinates [2Fe-2S] cluster. Mg(2+)-binding residues include D123 and K124. The residue at position 124 (K124) is an N6-carboxylysine. Position 195 (C195) interacts with [2Fe-2S] cluster. Position 491 (E491) interacts with Mg(2+). Catalysis depends on S517, which acts as the Proton acceptor.

It belongs to the IlvD/Edd family. As to quaternary structure, homodimer. The cofactor is [2Fe-2S] cluster. Mg(2+) serves as cofactor.

The catalysed reaction is (2R)-2,3-dihydroxy-3-methylbutanoate = 3-methyl-2-oxobutanoate + H2O. The enzyme catalyses (2R,3R)-2,3-dihydroxy-3-methylpentanoate = (S)-3-methyl-2-oxopentanoate + H2O. It functions in the pathway amino-acid biosynthesis; L-isoleucine biosynthesis; L-isoleucine from 2-oxobutanoate: step 3/4. Its pathway is amino-acid biosynthesis; L-valine biosynthesis; L-valine from pyruvate: step 3/4. Functionally, functions in the biosynthesis of branched-chain amino acids. Catalyzes the dehydration of (2R,3R)-2,3-dihydroxy-3-methylpentanoate (2,3-dihydroxy-3-methylvalerate) into 2-oxo-3-methylpentanoate (2-oxo-3-methylvalerate) and of (2R)-2,3-dihydroxy-3-methylbutanoate (2,3-dihydroxyisovalerate) into 2-oxo-3-methylbutanoate (2-oxoisovalerate), the penultimate precursor to L-isoleucine and L-valine, respectively. The chain is Dihydroxy-acid dehydratase from Haemophilus influenzae (strain PittGG).